The primary structure comprises 267 residues: Undecaprenyl-diphosphatase (267 aa).

Transmembrane regions (helical) follow at residues 1–21 (MSLF…FLPI), 40–60 (GQAI…LYFW), 85–105 (LAFL…FLEV), 112–132 (LRSI…LYWA), 189–209 (AMLM…AEVI), 219–239 (DGAI…TLMF), and 245–265 (VSFT…LVIA).

This sequence belongs to the UppP family.

It is found in the cell inner membrane. The catalysed reaction is di-trans,octa-cis-undecaprenyl diphosphate + H2O = di-trans,octa-cis-undecaprenyl phosphate + phosphate + H(+). Functionally, catalyzes the dephosphorylation of undecaprenyl diphosphate (UPP). Confers resistance to bacitracin. The polypeptide is Undecaprenyl-diphosphatase (Jannaschia sp. (strain CCS1)).